Here is a 426-residue protein sequence, read N- to C-terminus: Mitochondrial distribution and morphology protein 12 (426 aa).

Positions 1 to 426 (MSIEVDWKTA…VFPSFWTFLI (426 aa)) constitute an SMP-LTD domain. Disordered stretches follow at residues 88–147 (AHGN…GTPG), 185–264 (WTDH…FRFP), and 346–370 (ADDQ…SPKR). Residues 96 to 109 (THSELNEPPYRDEV) are compositionally biased toward basic and acidic residues. Residues 216–236 (SSNPTSRPSTSSTLPSHPSGS) are compositionally biased toward low complexity. 2 stretches are compositionally biased toward basic and acidic residues: residues 244–264 (SHPE…FRFP) and 349–360 (QETRDKDDHPRS).

This sequence belongs to the MDM12 family. As to quaternary structure, component of the ER-mitochondria encounter structure (ERMES) or MDM complex, composed of mmm1, mdm10, mdm12 and mdm34. A mmm1 homodimer associates with one molecule of mdm12 on each side in a pairwise head-to-tail manner, and the SMP-LTD domains of mmm1 and mdm12 generate a continuous hydrophobic tunnel for phospholipid trafficking.

Its subcellular location is the mitochondrion outer membrane. It is found in the endoplasmic reticulum membrane. In terms of biological role, component of the ERMES/MDM complex, which serves as a molecular tether to connect the endoplasmic reticulum (ER) and mitochondria. Components of this complex are involved in the control of mitochondrial shape and protein biogenesis, and function in nonvesicular lipid trafficking between the ER and mitochondria. Mdm12 is required for the interaction of the ER-resident membrane protein mmm1 and the outer mitochondrial membrane-resident beta-barrel protein mdm10. The mdm12-mmm1 subcomplex functions in the major beta-barrel assembly pathway that is responsible for biogenesis of all mitochondrial outer membrane beta-barrel proteins, and acts in a late step after the SAM complex. The mdm10-mdm12-mmm1 subcomplex further acts in the TOM40-specific pathway after the action of the mdm12-mmm1 complex. Essential for establishing and maintaining the structure of mitochondria and maintenance of mtDNA nucleoids. This is Mitochondrial distribution and morphology protein 12 from Aspergillus terreus (strain NIH 2624 / FGSC A1156).